The chain runs to 360 residues: Phospho-N-acetylmuramoyl-pentapeptide-transferase (360 aa).

Transmembrane regions (helical) follow at residues 16 to 36 (FAVFQYLTLRGILGVLTALVL), 73 to 93 (TMGGALILSSIGVSTLLWADL), 97 to 117 (YVWVVLLVTLLFGAIGWVDDY), 134 to 154 (YFWQSVFGLGAAIFLYMTAST), 168 to 188 (YSIPLGAGFIVLTYFVIVGSS), 199 to 219 (GLAIMPTVMVGGGLGIFCYLS), 236 to 256 (AGELIVFCGALIGAGLGFLWF), 263 to 283 (VFMGDVGALALGAALGTIAVI), 288 to 308 (IVLFIMGGVFVMETLSVVIQV), and 338 to 358 (VIVRFWIITVILVLIGLATLK).

It belongs to the glycosyltransferase 4 family. MraY subfamily. It depends on Mg(2+) as a cofactor.

It is found in the cell inner membrane. The catalysed reaction is UDP-N-acetyl-alpha-D-muramoyl-L-alanyl-gamma-D-glutamyl-meso-2,6-diaminopimeloyl-D-alanyl-D-alanine + di-trans,octa-cis-undecaprenyl phosphate = di-trans,octa-cis-undecaprenyl diphospho-N-acetyl-alpha-D-muramoyl-L-alanyl-D-glutamyl-meso-2,6-diaminopimeloyl-D-alanyl-D-alanine + UMP. It functions in the pathway cell wall biogenesis; peptidoglycan biosynthesis. Functionally, catalyzes the initial step of the lipid cycle reactions in the biosynthesis of the cell wall peptidoglycan: transfers peptidoglycan precursor phospho-MurNAc-pentapeptide from UDP-MurNAc-pentapeptide onto the lipid carrier undecaprenyl phosphate, yielding undecaprenyl-pyrophosphoryl-MurNAc-pentapeptide, known as lipid I. The protein is Phospho-N-acetylmuramoyl-pentapeptide-transferase of Pseudomonas fluorescens (strain Pf0-1).